The primary structure comprises 342 residues: D-erythrose-4-phosphate dehydrogenase (342 aa).

12–13 provides a ligand contact to NAD(+); the sequence is RI. Residues 154 to 156, arginine 200, 213 to 214, and arginine 236 contribute to the substrate site; these read SCT and TK. Cysteine 155 functions as the Nucleophile in the catalytic mechanism. Asparagine 318 contacts NAD(+).

This sequence belongs to the glyceraldehyde-3-phosphate dehydrogenase family. Epd subfamily. In terms of assembly, homotetramer.

The protein resides in the cytoplasm. It carries out the reaction D-erythrose 4-phosphate + NAD(+) + H2O = 4-phospho-D-erythronate + NADH + 2 H(+). The protein operates within cofactor biosynthesis; pyridoxine 5'-phosphate biosynthesis; pyridoxine 5'-phosphate from D-erythrose 4-phosphate: step 1/5. In terms of biological role, catalyzes the NAD-dependent conversion of D-erythrose 4-phosphate to 4-phosphoerythronate. The sequence is that of D-erythrose-4-phosphate dehydrogenase from Klebsiella pneumoniae (strain 342).